The sequence spans 229 residues: Cytidylate kinase (229 aa).

Gly-12–Thr-20 contributes to the ATP binding site.

The protein belongs to the cytidylate kinase family. Type 1 subfamily.

The protein resides in the cytoplasm. It carries out the reaction CMP + ATP = CDP + ADP. The enzyme catalyses dCMP + ATP = dCDP + ADP. This Pseudomonas fluorescens (strain ATCC BAA-477 / NRRL B-23932 / Pf-5) protein is Cytidylate kinase.